Consider the following 518-residue polypeptide: Sodium-dependent glucose transporter 1 (518 aa).

The next 12 membrane-spanning stretches (helical) occupy residues T19–V39, G53–T73, C82–L102, N107–F127, L139–H159, F221–Y241, T307–S327, Y347–M367, L376–A396, L400–R420, E438–E458, and S466–Y486. The span at R414–K426 shows a compositional bias: basic and acidic residues. Positions R414 to K448 are disordered. Over residues E436–K448 the composition is skewed to acidic residues.

It belongs to the major facilitator superfamily.

The protein localises to the apical cell membrane. May function as a sodium-dependent glucose transporter. Potential channels for urea in the inner medulla of kidney. This Homo sapiens (Human) protein is Sodium-dependent glucose transporter 1.